The primary structure comprises 520 residues: Nonsense-mediated mRNA decay factor SMG9 (520 aa).

2 disordered regions span residues 1 to 94 (MSES…PAPL) and 107 to 143 (GKGP…QRPT). S2 is modified (N-acetylserine). Phosphoserine occurs at positions 2, 4, 7, 32, and 53. Positions 36–53 (GRERDYIAPWERERRDGS) are enriched in basic and acidic residues. Residues 78–94 (QPPPSTAPAAPPAPAPL) show a composition bias toward pro residues. Low complexity predominate over residues 112-121 (AATGASTPEG). A compositionally biased stretch (pro residues) spans 122-133 (TAPPPPTAPAPP). S451 is modified (phosphoserine).

The protein belongs to the SMG9 family. Self-associates to form homodimers and forms heterodimers with SMG8; these assembly forms may represent SMG1C intermediate forms. Component of the SMG1C complex composed of SMG1, SMG8 and SMG9. Interacts with DHX34; the interaction is RNA-independent. In terms of processing, phosphorylated by SMG1.

Involved in nonsense-mediated decay (NMD) of mRNAs containing premature stop codons. Is recruited by release factors to stalled ribosomes together with SMG1 and SMG8 (forming the SMG1C protein kinase complex) and, in the SMG1C complex, is required for the efficient association between SMG1 and SMG8. Plays a role in brain, heart, and eye development. This is Nonsense-mediated mRNA decay factor SMG9 from Rattus norvegicus (Rat).